The primary structure comprises 393 residues: 6-hydroxy-3-succinoylpyridine 3-monooxygenase HspB (393 aa).

FAD is bound by residues 6–35 and 277–287; these read RVIIVGGGPVGLLTALGLAKAGTNVVVLEA and MRNGRVILIGD.

Belongs to the PheA/TfdB FAD monooxygenase family. As to quaternary structure, homodimer. The cofactor is FAD.

The catalysed reaction is 4-(6-hydroxypyridin-3-yl)-4-oxobutanoate + 2 NADH + O2 + 2 H(+) = 2,5-dihydroxypyridine + succinate semialdehyde + 2 NAD(+) + H2O. Its pathway is alkaloid degradation; nicotine degradation. With respect to regulation, inhibited by Cu(2+) and Zn(2+). Its function is as follows. Involved in the nicotine degradation. Catalyzes the cleavage of 6-hydroxy-3-succinoylpyridine (HSP) by incorporation of oxygen at the 3-position to produce to 2,5-dihydroxypyridine (DHP) and succinic semialdehyde. The sequence is that of 6-hydroxy-3-succinoylpyridine 3-monooxygenase HspB from Pseudomonas putida (strain DSM 28022 / S16).